The chain runs to 491 residues: uncharacterized protein (491 aa).

Residues 1 to 92 form the PE domain; it reads MSFVIASPEA…GGGSYASAEI (92 aa). Disordered stretches follow at residues 114–156, 376–400, and 419–491; these read PLVG…AGGA, AGGS…GNPG, and AGQG…GPDG. Gly residues predominate over residues 128–145; the sequence is GQPGGDGGILWGNGGNGG. Positions 432-480 are enriched in gly residues; the sequence is GGPGGVGGHGGTAILFGDGGAGGAGAAGGPGTPDGAAGPGGSGGTGGLL.

The protein belongs to the mycobacterial PE family. PGRS subfamily.

This is an uncharacterized protein from Mycobacterium bovis (strain ATCC BAA-935 / AF2122/97).